Consider the following 241-residue polypeptide: Putative inactive serine protease 58 (241 aa).

The first 17 residues, 1 to 17, serve as a signal peptide directing secretion; that stretch reads MKLAFLCILSTLLRTFA. The region spanning 18 to 239 is the Peptidase S1 domain; that stretch reads YNPDHIAGTT…YLPWIEDTMK (222 aa). Residues Cys-41 and Cys-57 are joined by a disulfide bond. Active-site charge relay system residues include His-56 and Asp-101. Disulfide bonds link Cys-133/Cys-201, Cys-165/Cys-180, and Cys-191/Cys-215. Asn-156 carries N-linked (GlcNAc...) asparagine glycosylation.

This sequence belongs to the peptidase S1 family.

Its subcellular location is the secreted. It catalyses the reaction Preferential cleavage: Arg-|-Xaa, Lys-|-Xaa.. In Mus musculus (Mouse), this protein is Putative inactive serine protease 58 (Prss58).